The sequence spans 460 residues: UDP-N-acetylmuramoylalanine--D-glutamate ligase (460 aa).

ATP is bound at residue 120–126; the sequence is GSNGKTT.

Belongs to the MurCDEF family.

It localises to the cytoplasm. It carries out the reaction UDP-N-acetyl-alpha-D-muramoyl-L-alanine + D-glutamate + ATP = UDP-N-acetyl-alpha-D-muramoyl-L-alanyl-D-glutamate + ADP + phosphate + H(+). The protein operates within cell wall biogenesis; peptidoglycan biosynthesis. Cell wall formation. Catalyzes the addition of glutamate to the nucleotide precursor UDP-N-acetylmuramoyl-L-alanine (UMA). This Lactobacillus gasseri (strain ATCC 33323 / DSM 20243 / BCRC 14619 / CIP 102991 / JCM 1131 / KCTC 3163 / NCIMB 11718 / NCTC 13722 / AM63) protein is UDP-N-acetylmuramoylalanine--D-glutamate ligase.